The primary structure comprises 389 residues: Chalcone synthase (389 aa).

Cys-164 is a catalytic residue.

This sequence belongs to the thiolase-like superfamily. Chalcone/stilbene synthases family.

It carries out the reaction (E)-4-coumaroyl-CoA + 3 malonyl-CoA + 3 H(+) = 2',4,4',6'-tetrahydroxychalcone + 3 CO2 + 4 CoA. It participates in secondary metabolite biosynthesis; flavonoid biosynthesis. Its function is as follows. The primary product of this enzyme is 4,2',4',6'-tetrahydroxychalcone (also termed naringenin-chalcone or chalcone) which can under specific conditions spontaneously isomerize into naringenin. The sequence is that of Chalcone synthase (CHS1) from Casuarina glauca (Swamp oak).